Here is a 451-residue protein sequence, read N- to C-terminus: tRNA modification GTPase MnmE (451 aa).

(6S)-5-formyl-5,6,7,8-tetrahydrofolate contacts are provided by Arg25, Glu82, and Lys121. The 158-residue stretch at 217–374 (GMSVVILGRP…LKQHLKTEMG (158 aa)) folds into the TrmE-type G domain. Residue Asn227 coordinates K(+). Residues 227-232 (NAGKSS), 246-252 (TDIAGTT), and 271-274 (DTAG) each bind GTP. Ser231 is a Mg(2+) binding site. K(+)-binding residues include Thr246, Ile248, and Thr251. Thr252 lines the Mg(2+) pocket. (6S)-5-formyl-5,6,7,8-tetrahydrofolate is bound at residue Lys451.

This sequence belongs to the TRAFAC class TrmE-Era-EngA-EngB-Septin-like GTPase superfamily. TrmE GTPase family. In terms of assembly, homodimer. Heterotetramer of two MnmE and two MnmG subunits. K(+) serves as cofactor.

It localises to the cytoplasm. In terms of biological role, exhibits a very high intrinsic GTPase hydrolysis rate. Involved in the addition of a carboxymethylaminomethyl (cmnm) group at the wobble position (U34) of certain tRNAs, forming tRNA-cmnm(5)s(2)U34. The chain is tRNA modification GTPase MnmE from Hydrogenovibrio crunogenus (strain DSM 25203 / XCL-2) (Thiomicrospira crunogena).